Here is a 516-residue protein sequence, read N- to C-terminus: Citrate synthase, glyoxysomal (516 aa).

A glyoxysome-targeting transit peptide spans 1-43 (MPTDMELSPSNVARHRLAVLAAHLSAASLEPPVMASSLEAHCV). Active-site residues include His329, His368, and Asp424.

The protein belongs to the citrate synthase family.

The protein localises to the glyoxysome. It carries out the reaction oxaloacetate + acetyl-CoA + H2O = citrate + CoA + H(+). It functions in the pathway carbohydrate metabolism; glyoxylate cycle; isocitrate from oxaloacetate: step 1/2. The protein is Citrate synthase, glyoxysomal of Cucurbita maxima (Pumpkin).